The following is an 881-amino-acid chain: Valine--tRNA ligase (881 aa).

Residues 48–58 carry the 'HIGH' region motif; the sequence is PNITGKLHLGH. The short motif at 527 to 531 is the 'KMSKS' region element; sequence KMSKS. K530 provides a ligand contact to ATP. Coiled coils occupy residues 721–747 and 811–881; these read KNET…AEMN and LLDL…AALK.

Belongs to the class-I aminoacyl-tRNA synthetase family. ValS type 1 subfamily. In terms of assembly, monomer.

The protein resides in the cytoplasm. It catalyses the reaction tRNA(Val) + L-valine + ATP = L-valyl-tRNA(Val) + AMP + diphosphate. Functionally, catalyzes the attachment of valine to tRNA(Val). As ValRS can inadvertently accommodate and process structurally similar amino acids such as threonine, to avoid such errors, it has a 'posttransfer' editing activity that hydrolyzes mischarged Thr-tRNA(Val) in a tRNA-dependent manner. This is Valine--tRNA ligase from Clostridium acetobutylicum (strain ATCC 824 / DSM 792 / JCM 1419 / IAM 19013 / LMG 5710 / NBRC 13948 / NRRL B-527 / VKM B-1787 / 2291 / W).